Reading from the N-terminus, the 320-residue chain is o-succinylbenzoate synthase (320 aa).

The Proton donor role is filled by lysine 133. Mg(2+)-binding residues include aspartate 161, glutamate 190, and aspartate 213. Lysine 235 (proton acceptor) is an active-site residue.

The protein belongs to the mandelate racemase/muconate lactonizing enzyme family. MenC type 1 subfamily. It depends on a divalent metal cation as a cofactor.

It carries out the reaction (1R,6R)-6-hydroxy-2-succinyl-cyclohexa-2,4-diene-1-carboxylate = 2-succinylbenzoate + H2O. It functions in the pathway quinol/quinone metabolism; 1,4-dihydroxy-2-naphthoate biosynthesis; 1,4-dihydroxy-2-naphthoate from chorismate: step 4/7. The protein operates within quinol/quinone metabolism; menaquinone biosynthesis. Functionally, converts 2-succinyl-6-hydroxy-2,4-cyclohexadiene-1-carboxylate (SHCHC) to 2-succinylbenzoate (OSB). This chain is o-succinylbenzoate synthase, found in Escherichia coli O127:H6 (strain E2348/69 / EPEC).